Here is a 363-residue protein sequence, read N- to C-terminus: uncharacterized protein (363 aa).

This is an uncharacterized protein from Methanocaldococcus jannaschii (strain ATCC 43067 / DSM 2661 / JAL-1 / JCM 10045 / NBRC 100440) (Methanococcus jannaschii).